Consider the following 223-residue polypeptide: Ribose-5-phosphate isomerase A (223 aa).

Substrate contacts are provided by residues 32-35 (TGST), 85-88 (DGAD), and 98-101 (KGGG). Glutamate 107 functions as the Proton acceptor in the catalytic mechanism. Lysine 125 serves as a coordination point for substrate.

The protein belongs to the ribose 5-phosphate isomerase family. As to quaternary structure, homodimer.

It catalyses the reaction aldehydo-D-ribose 5-phosphate = D-ribulose 5-phosphate. It functions in the pathway carbohydrate degradation; pentose phosphate pathway; D-ribose 5-phosphate from D-ribulose 5-phosphate (non-oxidative stage): step 1/1. Its function is as follows. Catalyzes the reversible conversion of ribose-5-phosphate to ribulose 5-phosphate. This is Ribose-5-phosphate isomerase A from Pseudomonas fluorescens (strain ATCC BAA-477 / NRRL B-23932 / Pf-5).